The chain runs to 197 residues: uncharacterized protein (197 aa).

Residues I11 to V31 form a helical membrane-spanning segment.

The protein resides in the membrane. This is an uncharacterized protein from Mycoplasma pneumoniae (strain ATCC 29342 / M129 / Subtype 1) (Mycoplasmoides pneumoniae).